Reading from the N-terminus, the 635-residue chain is MERWSINDSAKIYNLNNWGGDLFSINKKGNICVHPSPNSKYSIELASLVDDLIKRKIKPPILLRFMNILEGRIASINRVFRNAIQTNNYPAQYQTFYPIKVNQQRQVVEAIANFGKKYNIGLEVGSKPELVAAISISTNNSLPIICNGYKDTEFIETVLYATKIGYNITIVIEKLFELEKVIELSRKTGITPKLGIRVKLSSKGTGKWATSGGEDAKFGLRISEIITAIDLLKQYNLIDSVKLLHSHIGSQVTKIDKIKNALIEGARIYVEMKKLGVNLEYIDIGGGLGVDYDGSKSSYFSSVNYSVEEYANDVIYQIKNICDEAGVDCPNIISESGRATVAHYSVMVTNILNTNTQNQMPDFESILTQAEPLSPTVRKLVDIYKSIDRHSLREDYHDTLQLIQEAVSLFNLGYLNLNDRAMAEWLYTRIIKKINNLVEKMKPVPEELQNFKLSMRQTYFANFSLFQSIPDSWAIDQLFPIMPIQRLGEKPDVIASIADITCDSDGEITSFVGENGRTKYLPLHKIRKNEEYYIGFFLIGAYQEILGDLHNLFGDTNAVHITFNKKTNYRIDTVISGDAIQQSLKYVQYDGNEILKKVRDSLENGVASKKISIEESSHFLELLDKTIQAYTYLGE.

Position 100 is an N6-(pyridoxal phosphate)lysine (lysine 100). 282 to 292 (IDIGGGLGVDY) serves as a coordination point for substrate.

It belongs to the Orn/Lys/Arg decarboxylase class-II family. SpeA subfamily. It depends on Mg(2+) as a cofactor. Pyridoxal 5'-phosphate serves as cofactor.

It catalyses the reaction L-arginine + H(+) = agmatine + CO2. Its pathway is amine and polyamine biosynthesis; agmatine biosynthesis; agmatine from L-arginine: step 1/1. Functionally, catalyzes the biosynthesis of agmatine from arginine. The protein is Biosynthetic arginine decarboxylase of Pelobacter propionicus (strain DSM 2379 / NBRC 103807 / OttBd1).